A 101-amino-acid chain; its full sequence is Small ribosomal subunit protein uS14 (101 aa).

Belongs to the universal ribosomal protein uS14 family. Part of the 30S ribosomal subunit. Contacts proteins S3 and S10.

Functionally, binds 16S rRNA, required for the assembly of 30S particles and may also be responsible for determining the conformation of the 16S rRNA at the A site. This chain is Small ribosomal subunit protein uS14, found in Aeromonas hydrophila subsp. hydrophila (strain ATCC 7966 / DSM 30187 / BCRC 13018 / CCUG 14551 / JCM 1027 / KCTC 2358 / NCIMB 9240 / NCTC 8049).